A 432-amino-acid chain; its full sequence is 2-oxoglutarate-dependent dioxygenase AOP2 (432 aa).

A Fe2OG dioxygenase domain is found at 281 to 378; it reads SGDDVEANDD…RYTAAIFTCP (98 aa). Fe cation contacts are provided by His301, Asp303, and His358. 2-oxoglutarate is bound at residue Arg369.

It belongs to the iron/ascorbate-dependent oxidoreductase family. The cofactor is Fe(2+).

Functionally, 2-oxoglutarate-dependent dioxygenase involved in glucosinolates biosynthesis. Catalyzes the conversion of methylsulfinylalkyl glucosinolates to alkenyl glucosinolates. In Arabidopsis thaliana (Mouse-ear cress), this protein is 2-oxoglutarate-dependent dioxygenase AOP2 (AOP2).